A 49-amino-acid chain; its full sequence is Large ribosomal subunit protein bL33A (49 aa).

The disordered stretch occupies residues Lys21–Lys49. Positions Asn25–Lys49 are enriched in basic and acidic residues.

This sequence belongs to the bacterial ribosomal protein bL33 family.

In Staphylococcus epidermidis (strain ATCC 35984 / DSM 28319 / BCRC 17069 / CCUG 31568 / BM 3577 / RP62A), this protein is Large ribosomal subunit protein bL33A.